Here is a 362-residue protein sequence, read N- to C-terminus: Alternative oxidase, mitochondrial (362 aa).

The transit peptide at 1 to 64 directs the protein to the mitochondrion; that stretch reads MNTPKVNILH…RNFSTTSVTR (64 aa). Residues 156–176 form a helical membrane-spanning segment; that stretch reads LVRFIFLESIAGVPGMVAGML. Fe cation is bound by residues Glu163, Glu202, and His205. Residues 222 to 242 traverse the membrane as a helical segment; it reads LILGAQGVFFNAMFLSYLISP. Fe cation is bound by residues Glu253, Glu310, and His313.

This sequence belongs to the alternative oxidase family. Homodimer; disulfide-linked. Fe cation serves as cofactor.

It localises to the mitochondrion inner membrane. Catalyzes cyanide-resistant oxygen consumption. May increase respiration when the cytochrome respiratory pathway is restricted, or in response to low temperatures. The protein is Alternative oxidase, mitochondrial (aod-1) of Neurospora crassa (strain ATCC 24698 / 74-OR23-1A / CBS 708.71 / DSM 1257 / FGSC 987).